The chain runs to 251 residues: Ubiquinone/menaquinone biosynthesis C-methyltransferase UbiE (251 aa).

S-adenosyl-L-methionine is bound by residues Thr-74, Asp-92, and Ser-132.

Belongs to the class I-like SAM-binding methyltransferase superfamily. MenG/UbiE family.

It catalyses the reaction a 2-demethylmenaquinol + S-adenosyl-L-methionine = a menaquinol + S-adenosyl-L-homocysteine + H(+). The enzyme catalyses a 2-methoxy-6-(all-trans-polyprenyl)benzene-1,4-diol + S-adenosyl-L-methionine = a 5-methoxy-2-methyl-3-(all-trans-polyprenyl)benzene-1,4-diol + S-adenosyl-L-homocysteine + H(+). Its pathway is quinol/quinone metabolism; menaquinone biosynthesis; menaquinol from 1,4-dihydroxy-2-naphthoate: step 2/2. It participates in cofactor biosynthesis; ubiquinone biosynthesis. Functionally, methyltransferase required for the conversion of demethylmenaquinol (DMKH2) to menaquinol (MKH2) and the conversion of 2-polyprenyl-6-methoxy-1,4-benzoquinol (DDMQH2) to 2-polyprenyl-3-methyl-6-methoxy-1,4-benzoquinol (DMQH2). In Rubrivivax gelatinosus (strain NBRC 100245 / IL144), this protein is Ubiquinone/menaquinone biosynthesis C-methyltransferase UbiE.